Reading from the N-terminus, the 1033-residue chain is Collagen alpha-2(I) chain (1033 aa).

The segment at 1–1033 (SGGFDFSFLP…FGYEGDFYRA (1033 aa)) is disordered. 3 stretches are compositionally biased toward low complexity: residues 25 to 71 (LGPG…ARGP), 154 to 175 (SRGSDGSVGPVGPAGPIGSAGP), and 221 to 242 (PGANGLTGAKGAAGLPGVAGAP). Residues 276–285 (GESGGKGEPG) show a composition bias toward gly residues. Over residues 286–296 (SAGPQGPPGSS) the composition is skewed to low complexity. Over residues 318–327 (GLRGGPGSRG) the composition is skewed to gly residues. Composition is skewed to low complexity over residues 340 to 356 (PAGARGASGPAGVRGPS) and 391 to 410 (LPGIDGRPGPIGPAGARGEA). Residues 459–468 (GVQGGKGEQG) are compositionally biased toward gly residues. Composition is skewed to low complexity over residues 519-528 (PSGAIGSRGP) and 540-550 (EPGVVGAPGTA). The segment covering 551–560 (GPAGSGGLPG) has biased composition (gly residues). Composition is skewed to low complexity over residues 583–627 (VGTT…PRGS) and 634–654 (VGPAGPNGFAGPAGAAGQPGA). Basic and acidic residues predominate over residues 655 to 664 (KGERGTKGPK). Residues 672 to 682 (PTGPVGSAGPA) show a composition bias toward low complexity. Gly residues predominate over residues 692–701 (GSRGDGGPPG). The segment covering 703 to 712 (TGFPGAAGRT) has biased composition (low complexity). A compositionally biased stretch (gly residues) spans 749–758 (GETGAGGPPG). Composition is skewed to low complexity over residues 766–793 (SGEPGTAGPPGTAGPQGLLGAPGILGLP) and 801–811 (LPGVAGAVGEP). Over residues 812-834 (GPLGIGPPGARGPSGGVGPGVNG) the composition is skewed to gly residues. A compositionally biased stretch (low complexity) spans 873–909 (AAGAPGPHGAVGPAGKHGNRGEPGPVGSAGPVGALGP). A compositionally biased stretch (basic and acidic residues) spans 919-930 (RGDKGEAGDKGP). A compositionally biased stretch (pro residues) spans 1003–1015 (SGPPGPPGPPGPP).

Belongs to the fibrillar collagen family. As to quaternary structure, trimers of one alpha 2(I) and two alpha 1(I) chains. Interacts (via C-terminus) with TMEM131 (via PapD-L domain); the interaction is direct and is involved in assembly and TRAPPIII ER-to-Golgi transport complex-dependent secretion of collagen. In terms of processing, prolines at the third position of the tripeptide repeating unit (G-X-Y) are hydroxylated in some or all of the chains. Expressed in bone.

The protein resides in the secreted. It is found in the extracellular space. It localises to the extracellular matrix. Functionally, type I collagen is a member of group I collagen (fibrillar forming collagen). This is Collagen alpha-2(I) chain from Mylodon darwinii (Giant ground sloth).